We begin with the raw amino-acid sequence, 76 residues long: Exodeoxyribonuclease 7 small subunit (76 aa).

Belongs to the XseB family. As to quaternary structure, heterooligomer composed of large and small subunits.

Its subcellular location is the cytoplasm. The enzyme catalyses Exonucleolytic cleavage in either 5'- to 3'- or 3'- to 5'-direction to yield nucleoside 5'-phosphates.. Its function is as follows. Bidirectionally degrades single-stranded DNA into large acid-insoluble oligonucleotides, which are then degraded further into small acid-soluble oligonucleotides. This is Exodeoxyribonuclease 7 small subunit from Enterococcus faecalis (strain ATCC 700802 / V583).